The sequence spans 429 residues: Bifunctional protein GlmU (429 aa).

A pyrophosphorylase region spans residues 1-223 (MKTSILILAA…EDEFMGINDK (223 aa)). Residues 8–11 (LAAG), lysine 22, and 81–82 (GT) each bind UDP-N-acetyl-alpha-D-glucosamine. Position 102 (aspartate 102) interacts with Mg(2+). Residues glycine 135, glutamate 149, asparagine 164, and asparagine 221 each coordinate UDP-N-acetyl-alpha-D-glucosamine. Residue asparagine 221 coordinates Mg(2+). The linker stretch occupies residues 224–244 (FELSIAENFMQEKIKKYWMQQ). The interval 245 to 429 (GVIFHLPQST…KDYYYKKFQK (185 aa)) is N-acetyltransferase. UDP-N-acetyl-alpha-D-glucosamine is bound by residues arginine 308 and lysine 325. Histidine 336 (proton acceptor) is an active-site residue. Positions 339 and 350 each coordinate UDP-N-acetyl-alpha-D-glucosamine. Acetyl-CoA contacts are provided by residues 359 to 360 (NY), serine 378, alanine 396, and arginine 413.

In the N-terminal section; belongs to the N-acetylglucosamine-1-phosphate uridyltransferase family. It in the C-terminal section; belongs to the transferase hexapeptide repeat family. In terms of assembly, homotrimer. Mg(2+) is required as a cofactor.

It is found in the cytoplasm. The catalysed reaction is alpha-D-glucosamine 1-phosphate + acetyl-CoA = N-acetyl-alpha-D-glucosamine 1-phosphate + CoA + H(+). It catalyses the reaction N-acetyl-alpha-D-glucosamine 1-phosphate + UTP + H(+) = UDP-N-acetyl-alpha-D-glucosamine + diphosphate. The protein operates within nucleotide-sugar biosynthesis; UDP-N-acetyl-alpha-D-glucosamine biosynthesis; N-acetyl-alpha-D-glucosamine 1-phosphate from alpha-D-glucosamine 6-phosphate (route II): step 2/2. Its pathway is nucleotide-sugar biosynthesis; UDP-N-acetyl-alpha-D-glucosamine biosynthesis; UDP-N-acetyl-alpha-D-glucosamine from N-acetyl-alpha-D-glucosamine 1-phosphate: step 1/1. It functions in the pathway bacterial outer membrane biogenesis; LPS lipid A biosynthesis. In terms of biological role, catalyzes the last two sequential reactions in the de novo biosynthetic pathway for UDP-N-acetylglucosamine (UDP-GlcNAc). The C-terminal domain catalyzes the transfer of acetyl group from acetyl coenzyme A to glucosamine-1-phosphate (GlcN-1-P) to produce N-acetylglucosamine-1-phosphate (GlcNAc-1-P), which is converted into UDP-GlcNAc by the transfer of uridine 5-monophosphate (from uridine 5-triphosphate), a reaction catalyzed by the N-terminal domain. The protein is Bifunctional protein GlmU of Campylobacter jejuni subsp. jejuni serotype O:6 (strain 81116 / NCTC 11828).